Reading from the N-terminus, the 412-residue chain is Allantoate amidohydrolase (412 aa).

4 residues coordinate Zn(2+): His-84, Asp-95, Glu-130, and His-193. The allantoate site is built by Arg-218, Asn-278, and Arg-291. Residue His-385 participates in Zn(2+) binding.

The protein belongs to the peptidase M20 family. Homodimer. Requires Zn(2+) as cofactor.

The protein resides in the cytoplasm. It catalyses the reaction allantoate + H2O + 2 H(+) = (S)-2-ureidoglycine + NH4(+) + CO2. It participates in nitrogen metabolism; (S)-allantoin degradation. Its function is as follows. Involved in the anaerobic nitrogen utilization via the assimilation of allantoin. Catalyzes specifically the hydrolysis of allantoate to yield CO2, NH3 and S-ureidoglycine, which is unstable and readily undergoes a second deamination by S-ureidoglycine aminohydrolase AllE to yield S-ureidoglycolate and NH3. The polypeptide is Allantoate amidohydrolase (Bacillus subtilis (strain 168)).